A 164-amino-acid chain; its full sequence is Cyanate hydratase (164 aa).

Catalysis depends on residues arginine 90, glutamate 93, and serine 116.

The protein belongs to the cyanase family.

The catalysed reaction is cyanate + hydrogencarbonate + 3 H(+) = NH4(+) + 2 CO2. Its function is as follows. Catalyzes the reaction of cyanate with bicarbonate to produce ammonia and carbon dioxide. This chain is Cyanate hydratase, found in Ricinus communis (Castor bean).